Consider the following 306-residue polypeptide: Aspartate carbamoyltransferase catalytic subunit (306 aa).

Carbamoyl phosphate-binding residues include arginine 54 and threonine 55. Lysine 83 contributes to the L-aspartate binding site. Arginine 104, histidine 132, and glutamine 135 together coordinate carbamoyl phosphate. Positions 165 and 227 each coordinate L-aspartate. Carbamoyl phosphate is bound by residues leucine 266 and proline 267.

It belongs to the aspartate/ornithine carbamoyltransferase superfamily. ATCase family. In terms of assembly, heterododecamer (2C3:3R2) of six catalytic PyrB chains organized as two trimers (C3), and six regulatory PyrI chains organized as three dimers (R2).

It catalyses the reaction carbamoyl phosphate + L-aspartate = N-carbamoyl-L-aspartate + phosphate + H(+). Its pathway is pyrimidine metabolism; UMP biosynthesis via de novo pathway; (S)-dihydroorotate from bicarbonate: step 2/3. Functionally, catalyzes the condensation of carbamoyl phosphate and aspartate to form carbamoyl aspartate and inorganic phosphate, the committed step in the de novo pyrimidine nucleotide biosynthesis pathway. The protein is Aspartate carbamoyltransferase catalytic subunit of Finegoldia magna (strain ATCC 29328 / DSM 20472 / WAL 2508) (Peptostreptococcus magnus).